The chain runs to 1238 residues: uncharacterized protein (1238 aa).

Disordered stretches follow at residues 22-83 (LQSA…QEHL), 96-150 (SSRQ…IASP), 169-250 (FEPD…HQML), 264-694 (QLNS…AAMV), 739-915 (TKAA…SVPE), 936-955 (THSAEDVNEKQTKVKKAPHE), and 1057-1089 (PKISMHKRKRKQTHDSSISYSDDPNESRSQCSS). Over residues 35 to 49 (QPPNQQPHQTQQQQQ) the composition is skewed to low complexity. Polar residues predominate over residues 58 to 72 (PSIQNLTTNATPTST). Low complexity predominate over residues 73–83 (QLQQQQQQEHL). The span at 96 to 110 (SSRQNQGAPSGNLSN) shows a compositional bias: polar residues. Residues 125-145 (SVSGNTNHTGSNSSSNSGSNN) show a composition bias toward low complexity. The span at 188 to 204 (SASSASKLPTHNVQQQH) shows a compositional bias: polar residues. Composition is skewed to low complexity over residues 272-287 (SYQHMQQDQTQSQSHP), 309-334 (PLLTSGQFHAQPQDASQQQTASSSQH), and 393-406 (SNEESLESNSNSSN). Residues 433–450 (SKPQHPQQAANLNNSCSP) are compositionally biased toward polar residues. Ser-453 is modified (phosphoserine). Residues 463 to 472 (PFSTQKQSQT) show a composition bias toward polar residues. The segment covering 523–536 (TEQHRMQQDDEPPK) has biased composition (basic and acidic residues). Composition is skewed to low complexity over residues 549 to 570 (QSNSSSSSSSSSSANTHSSQSS) and 632 to 641 (TTAAVAAPPA). Thr-642 carries the post-translational modification Phosphothreonine. Basic and acidic residues predominate over residues 678 to 688 (ERISSPEKPAE). A phosphoserine mark is found at Ser-682, Ser-749, and Ser-753. Residues 755–764 (IPQSRSTSTP) show a composition bias toward polar residues. A phosphoserine mark is found at Ser-793 and Ser-799. Over residues 832–860 (STSAAAAAALAARQLSEAASATKSKPAAG) the composition is skewed to low complexity. Residues 861-874 (AKKKNAGVKGKKGS) are compositionally biased toward basic residues. The span at 937–947 (HSAEDVNEKQT) shows a compositional bias: basic and acidic residues. Residues 1071 to 1089 (DSSISYSDDPNESRSQCSS) are compositionally biased toward polar residues. The C2HC pre-PHD-type; degenerate zinc-finger motif lies at 1089-1131 (SVDLLDCSTESKFVETFRGMGKTSENGFEVWLHEDCAVWSNDI). Ser-1099 carries the phosphoserine modification. The PHD-type zinc finger occupies 1151–1199 (YQCVLCQQTGASICCFQRCCKAAAHVPCGRSANWSLSEEDRKVYCHLHR).

This is an uncharacterized protein from Drosophila melanogaster (Fruit fly).